The primary structure comprises 167 residues: uncharacterized protein (167 aa).

DED domains follow at residues 2–75 (DLKT…NLFQ) and 93–167 (THVL…AKTV).

This is an uncharacterized protein from Saimiriine herpesvirus 2 (strain 11) (SaHV-2).